The following is a 146-amino-acid chain: Actin-depolymerizing factor 6 (146 aa).

Phosphoserine is present on serine 13. One can recognise an ADF-H domain in the interval 14 to 146 (GMGVADESKT…DLEVLRERAN (133 aa)).

This sequence belongs to the actin-binding proteins ADF family. Phosphorylated. As to expression, expressed in vascular tissues of all organs.

It is found in the cytoplasm. The protein localises to the cytoskeleton. Its function is as follows. Actin-depolymerizing protein. Severs actin filaments (F-actin) and binds to actin monomers. This chain is Actin-depolymerizing factor 6 (ADF6), found in Arabidopsis thaliana (Mouse-ear cress).